We begin with the raw amino-acid sequence, 274 residues long: tRNA-cytidine(32) 2-sulfurtransferase (274 aa).

The PP-loop motif motif lies at 40–45; it reads SGGKDS. The [4Fe-4S] cluster site is built by Cys-115, Cys-118, and Cys-206.

Belongs to the TtcA family. Homodimer. Requires Mg(2+) as cofactor. [4Fe-4S] cluster serves as cofactor.

It localises to the cytoplasm. It carries out the reaction cytidine(32) in tRNA + S-sulfanyl-L-cysteinyl-[cysteine desulfurase] + AH2 + ATP = 2-thiocytidine(32) in tRNA + L-cysteinyl-[cysteine desulfurase] + A + AMP + diphosphate + H(+). The protein operates within tRNA modification. Its function is as follows. Catalyzes the ATP-dependent 2-thiolation of cytidine in position 32 of tRNA, to form 2-thiocytidine (s(2)C32). The sulfur atoms are provided by the cysteine/cysteine desulfurase (IscS) system. This Pseudomonas putida (strain W619) protein is tRNA-cytidine(32) 2-sulfurtransferase.